Reading from the N-terminus, the 1080-residue chain is Carbamoyl phosphate synthase large chain (1080 aa).

The carboxyphosphate synthetic domain stretch occupies residues 1-403 (MPKRTDLKTI…SLQKALRGLE (403 aa)). The ATP site is built by R129, R169, G175, G176, E208, V210, E215, G241, V242, H243, Q285, and E299. In terms of domain architecture, ATP-grasp 1 spans 133–328 (RVAMGEIGLD…IAKVAAKLAV (196 aa)). Mg(2+)-binding residues include Q285, E299, and N301. Residues Q285, E299, and N301 each contribute to the Mn(2+) site. The segment at 404–554 (TGKIGLDPTG…YSTYEDECEA (151 aa)) is oligomerization domain. The carbamoyl phosphate synthetic domain stretch occupies residues 555–942 (LPSNRDKIMI…AFARAQEAGG (388 aa)). Positions 679–876 (QQLVDKLGLK…LAKIAARCMA (198 aa)) constitute an ATP-grasp 2 domain. The ATP site is built by R715, R754, L756, E761, G787, V788, H789, S790, Q830, and E847. 3 residues coordinate Mg(2+): Q830, E847, and N849. Q830, E847, and N849 together coordinate Mn(2+). In terms of domain architecture, MGS-like spans 943 to 1080 (IKAPPLGKAF…LQELHKELEA (138 aa)). The tract at residues 943–1080 (IKAPPLGKAF…LQELHKELEA (138 aa)) is allosteric domain.

It belongs to the CarB family. Composed of two chains; the small (or glutamine) chain promotes the hydrolysis of glutamine to ammonia, which is used by the large (or ammonia) chain to synthesize carbamoyl phosphate. Tetramer of heterodimers (alpha,beta)4. The cofactor is Mg(2+). It depends on Mn(2+) as a cofactor.

The catalysed reaction is hydrogencarbonate + L-glutamine + 2 ATP + H2O = carbamoyl phosphate + L-glutamate + 2 ADP + phosphate + 2 H(+). It carries out the reaction hydrogencarbonate + NH4(+) + 2 ATP = carbamoyl phosphate + 2 ADP + phosphate + 2 H(+). It participates in amino-acid biosynthesis; L-arginine biosynthesis; carbamoyl phosphate from bicarbonate: step 1/1. The protein operates within pyrimidine metabolism; UMP biosynthesis via de novo pathway; (S)-dihydroorotate from bicarbonate: step 1/3. In terms of biological role, large subunit of the glutamine-dependent carbamoyl phosphate synthetase (CPSase). CPSase catalyzes the formation of carbamoyl phosphate from the ammonia moiety of glutamine, carbonate, and phosphate donated by ATP, constituting the first step of 2 biosynthetic pathways, one leading to arginine and/or urea and the other to pyrimidine nucleotides. The large subunit (synthetase) binds the substrates ammonia (free or transferred from glutamine from the small subunit), hydrogencarbonate and ATP and carries out an ATP-coupled ligase reaction, activating hydrogencarbonate by forming carboxy phosphate which reacts with ammonia to form carbamoyl phosphate. The sequence is that of Carbamoyl phosphate synthase large chain from Xanthomonas campestris pv. campestris (strain ATCC 33913 / DSM 3586 / NCPPB 528 / LMG 568 / P 25).